The primary structure comprises 190 residues: Small ribosomal subunit protein uS7 (190 aa).

N-acetylthreonine is present on Thr-2.

This sequence belongs to the universal ribosomal protein uS7 family. In terms of assembly, component of the small ribosomal subunit. Part of the small subunit (SSU) processome, composed of more than 70 proteins and the RNA chaperone small nucleolar RNA (snoRNA) U3.

Its subcellular location is the cytoplasm. The protein localises to the nucleus. It is found in the nucleolus. In terms of biological role, component of the small ribosomal subunit. The ribosome is a large ribonucleoprotein complex responsible for the synthesis of proteins in the cell. Part of the small subunit (SSU) processome, first precursor of the small eukaryotic ribosomal subunit. During the assembly of the SSU processome in the nucleolus, many ribosome biogenesis factors, an RNA chaperone and ribosomal proteins associate with the nascent pre-rRNA and work in concert to generate RNA folding, modifications, rearrangements and cleavage as well as targeted degradation of pre-ribosomal RNA by the RNA exosome. This Dictyostelium discoideum (Social amoeba) protein is Small ribosomal subunit protein uS7 (rps5).